We begin with the raw amino-acid sequence, 645 residues long: Threonine--tRNA ligase (645 aa).

Residues 1–63 (MEQINIQFPD…ETDGSIEIVT (63 aa)) form the TGS domain. The catalytic stretch occupies residues 242 to 540 (DHRKIGKELE…LTEETKGAFP (299 aa)). Zn(2+) contacts are provided by Cys-336, His-387, and His-517.

This sequence belongs to the class-II aminoacyl-tRNA synthetase family. In terms of assembly, homodimer. Zn(2+) is required as a cofactor.

It is found in the cytoplasm. It catalyses the reaction tRNA(Thr) + L-threonine + ATP = L-threonyl-tRNA(Thr) + AMP + diphosphate + H(+). Catalyzes the attachment of threonine to tRNA(Thr) in a two-step reaction: L-threonine is first activated by ATP to form Thr-AMP and then transferred to the acceptor end of tRNA(Thr). Also edits incorrectly charged L-seryl-tRNA(Thr). This chain is Threonine--tRNA ligase, found in Staphylococcus aureus (strain NCTC 8325 / PS 47).